We begin with the raw amino-acid sequence, 858 residues long: Selenocysteine insertion sequence-binding protein 2 (858 aa).

Disordered stretches follow at residues 127-261, 275-296, and 327-625; these read KPRH…GDVG, SDHT…CTQE, and LKKT…DSAT. Basic and acidic residues-rich tracts occupy residues 147 to 166, 188 to 197, and 215 to 224; these read KPSD…RRAD, SSLKSDGYHK, and PEFEFSRLDF. Composition is skewed to polar residues over residues 281–296 and 327–352; these read AVTS…CTQE and LKKT…NPSY. Positions 380 to 387 match the Nuclear localization signal motif; it reads KNKKKKEK. Basic residues predominate over residues 418 to 429; sequence RRHRGQSPKLHS. The span at 430–447 shows a compositional bias: polar residues; sequence KQQTQNEFKTSGKKSQVP. Residues 539–548 are compositionally biased toward basic and acidic residues; the sequence is ILKERQERMQ. 2 stretches are compositionally biased toward polar residues: residues 554–563 and 571–582; these read SAVSLTVASD and GASNQTPSQDNP. Positions 678–699 are RNA-binding; sequence LVLGLREVLKHLKLRKLKCIII. The segment at 785–819 is disordered; the sequence is MRQEQAGEPGPQSPPSPPMQDPIPSTEEGTLPSTG. Residues 795-805 are compositionally biased toward pro residues; it reads PQSPPSPPMQD.

It localises to the cytoplasm. The protein localises to the nucleus. Functionally, mRNA-binding protein that binds to the SECIS (selenocysteine insertion sequence) element present in the 3'-UTR of mRNAs encoding selenoproteins and facilitates the incorporation of the rare amino acid selenocysteine. Insertion of selenocysteine at UGA codons is mediated by SECISBP2 and EEFSEC: SECISBP2 (1) specifically binds the SECIS sequence once the 80S ribosome encounters an in-frame UGA codon and (2) contacts the RPS27A/eS31 of the 40S ribosome before ribosome stalling. (3) GTP-bound EEFSEC then delivers selenocysteinyl-tRNA(Sec) to the 80S ribosome and adopts a preaccommodated state conformation. (4) After GTP hydrolysis, EEFSEC dissociates from the assembly, selenocysteinyl-tRNA(Sec) accommodates, and peptide bond synthesis and selenoprotein elongation occur. This chain is Selenocysteine insertion sequence-binding protein 2, found in Mus musculus (Mouse).